The sequence spans 669 residues: DNA ligase (669 aa).

NAD(+) is bound by residues 34 to 38, 83 to 84, and Glu-117; these read DAEYD and SL. Residue Lys-119 is the N6-AMP-lysine intermediate of the active site. NAD(+) is bound by residues Arg-140, Glu-177, Lys-293, and Lys-317. Zn(2+)-binding residues include Cys-411, Cys-414, Cys-429, and Cys-434. The 79-residue stretch at 591–669 folds into the BRCT domain; that stretch reads RLGGRFTGKT…EDEFLKMLEG (79 aa).

The protein belongs to the NAD-dependent DNA ligase family. LigA subfamily. It depends on Mg(2+) as a cofactor. Mn(2+) serves as cofactor.

It catalyses the reaction NAD(+) + (deoxyribonucleotide)n-3'-hydroxyl + 5'-phospho-(deoxyribonucleotide)m = (deoxyribonucleotide)n+m + AMP + beta-nicotinamide D-nucleotide.. Functionally, DNA ligase that catalyzes the formation of phosphodiester linkages between 5'-phosphoryl and 3'-hydroxyl groups in double-stranded DNA using NAD as a coenzyme and as the energy source for the reaction. It is essential for DNA replication and repair of damaged DNA. The polypeptide is DNA ligase (Geotalea daltonii (strain DSM 22248 / JCM 15807 / FRC-32) (Geobacter daltonii)).